Here is a 475-residue protein sequence, read N- to C-terminus: Ribosomal protein uS12 methylthiotransferase RimO (475 aa).

In terms of domain architecture, MTTase N-terminal spans 36-150 (NKINFISLGC…ILKAVQSTQK (115 aa)). [4Fe-4S] cluster-binding residues include cysteine 45, cysteine 81, cysteine 113, cysteine 185, cysteine 189, and cysteine 192. Positions 171–403 (STPKHYAYLK…MQVQKKVVKK (233 aa)) constitute a Radical SAM core domain. The TRAM domain occupies 406 to 475 (KKMIGKKIAV…ADYDLVGHVI (70 aa)).

It belongs to the methylthiotransferase family. RimO subfamily. [4Fe-4S] cluster serves as cofactor.

It localises to the cytoplasm. The enzyme catalyses L-aspartate(89)-[ribosomal protein uS12]-hydrogen + (sulfur carrier)-SH + AH2 + 2 S-adenosyl-L-methionine = 3-methylsulfanyl-L-aspartate(89)-[ribosomal protein uS12]-hydrogen + (sulfur carrier)-H + 5'-deoxyadenosine + L-methionine + A + S-adenosyl-L-homocysteine + 2 H(+). Catalyzes the methylthiolation of an aspartic acid residue of ribosomal protein uS12. The chain is Ribosomal protein uS12 methylthiotransferase RimO from Protochlamydia amoebophila (strain UWE25).